We begin with the raw amino-acid sequence, 860 residues long: MVKDKAPDLSKHTPMMRQYLALKANHPNTLLFYRMGDFYELFHEDAEKAARLLDITLTTRGQSAGVPIKMCGIPFHSLEPYLARLVKLGESAVICEQIGDPATSKGPVERAVARIVTPGTLTDAALIDDKQDLWLLAVTTHRNTAGIARLNLASGEFILIEVPTEQIPATLERIRPAEILYPESWTPNFGVDVARTRQPDWYFEFDSARRLLCDQFEVASLAGFGAEGLKPAIAAAGALLQYAQATQSGKLPHLRGLTVEIEGAYLGLDLATRRNLELTETLRGQPSPTLFSLLDNCVTSMGSRLLRHTLHHPLRARDIPAARHGAVEALLEDYGRLGNEVRKALRGIADIERIAGRVALRNARPRDLASLRESVARLEGLRAPLSDSPAPLIAQLFTELETPYPALELLVRAIAAEPGAQVRDGGVIAPGYDPDLDELRSLNDNCGAFLVDMEARERERSGIASLKVEYNKVHGFYIEVTHANVDKIPDDYRRRQTLKNAERYITPELKAFEDKALSAQERSLAREKLLYEAILDALLPVVPTLQTIARAIAQLDLLAGFAESALKRNWCKPEFAAETQLSITGGRHPVVEGELTNQAETFIANDCLLAENRRLLLITGPNMGGKSTYMRQVALIALLAHIGCYVPADRCVLGPLDRIFTRIGASDDLASGRSTFMVEMTEAAAILHHATNQSLVLMDEIGRGTSTFDGMALAFAILRHLIEKNQSLTLFATHYFELTRLSHEYSELANVHLGAVEHNDRIVFMHAVEEGPANQSYGIQVAALAGIPTAVVRAARKQLREFEQRAAVDPLQPDLFAQGAPEPAEPEPHPVVEQLAAIDPDSLTPREALDALYALKGLLR.

620–627 (GPNMGGKS) provides a ligand contact to ATP.

It belongs to the DNA mismatch repair MutS family.

This protein is involved in the repair of mismatches in DNA. It is possible that it carries out the mismatch recognition step. This protein has a weak ATPase activity. In Dechloromonas aromatica (strain RCB), this protein is DNA mismatch repair protein MutS.